Here is a 389-residue protein sequence, read N- to C-terminus: MLLMLAQWLQDDFGFFRVFNYITFRAVMATVTALLIGLAAGPWVIRKLAALKVGQAVRTDGPQTHLVKSGTPTMGGVLILIGIFISCILWADLSNRFIWIVMIVTFGFGLVGWVDDYRKVVYKDPKGMASRGKFFWQTLIGLFAAIYLAFSVSEVNNLKVLQLFYKWLRSGFALDLPAKTNLLLPFMKEVSYPLGIMGFIILSYLVIVGSSNAVNLTDGLDGLVIMPVILVGAALGAFAYVMGNAIYAKYLLFPYIPGAGELMIFCGAMGGAGLAFLWYNTHPAQVFMGDVGALALGGALGTIAVIVRQEIVLFVMGGIFVAETISVMLQVFWFKVTKKHFGEGRRIFRMAPLHHHFELGGWKETQVVVRFWIITILLVLIGLSSLKLR.

The next 10 helical transmembrane spans lie at 25–45 (RAVMATVTALLIGLAAGPWVI), 73–93 (TMGGVLILIGIFISCILWADL), 97–117 (FIWIVMIVTFGFGLVGWVDDY), 134–154 (FFWQTLIGLFAAIYLAFSVSE), 190–210 (VSYPLGIMGFIILSYLVIVGS), 222–242 (GLVIMPVILVGAALGAFAYVM), 258–278 (GAGELMIFCGAMGGAGLAFLW), 286–306 (VFMGDVGALALGGALGTIAVI), 311–331 (IVLFVMGGIFVAETISVMLQV), and 366–386 (QVVVRFWIITILLVLIGLSSL).

This sequence belongs to the glycosyltransferase 4 family. MraY subfamily. Requires Mg(2+) as cofactor.

It is found in the cell inner membrane. The enzyme catalyses UDP-N-acetyl-alpha-D-muramoyl-L-alanyl-gamma-D-glutamyl-meso-2,6-diaminopimeloyl-D-alanyl-D-alanine + di-trans,octa-cis-undecaprenyl phosphate = di-trans,octa-cis-undecaprenyl diphospho-N-acetyl-alpha-D-muramoyl-L-alanyl-D-glutamyl-meso-2,6-diaminopimeloyl-D-alanyl-D-alanine + UMP. Its pathway is cell wall biogenesis; peptidoglycan biosynthesis. Its function is as follows. Catalyzes the initial step of the lipid cycle reactions in the biosynthesis of the cell wall peptidoglycan: transfers peptidoglycan precursor phospho-MurNAc-pentapeptide from UDP-MurNAc-pentapeptide onto the lipid carrier undecaprenyl phosphate, yielding undecaprenyl-pyrophosphoryl-MurNAc-pentapeptide, known as lipid I. This Polynucleobacter necessarius subsp. necessarius (strain STIR1) protein is Phospho-N-acetylmuramoyl-pentapeptide-transferase.